The primary structure comprises 266 residues: 4-hydroxy-tetrahydrodipicolinate reductase (266 aa).

10–15 (GPRGRM) is an NAD(+) binding site. Position 38 (lysine 38) interacts with NADP(+). Residues 99 to 101 (GTT) and 125 to 128 (APNF) each bind NAD(+). Histidine 155 (proton donor/acceptor) is an active-site residue. Histidine 156 is a binding site for (S)-2,3,4,5-tetrahydrodipicolinate. The Proton donor role is filled by lysine 159. 165–166 (GT) is a binding site for (S)-2,3,4,5-tetrahydrodipicolinate.

Belongs to the DapB family.

The protein localises to the cytoplasm. The enzyme catalyses (S)-2,3,4,5-tetrahydrodipicolinate + NAD(+) + H2O = (2S,4S)-4-hydroxy-2,3,4,5-tetrahydrodipicolinate + NADH + H(+). It carries out the reaction (S)-2,3,4,5-tetrahydrodipicolinate + NADP(+) + H2O = (2S,4S)-4-hydroxy-2,3,4,5-tetrahydrodipicolinate + NADPH + H(+). It functions in the pathway amino-acid biosynthesis; L-lysine biosynthesis via DAP pathway; (S)-tetrahydrodipicolinate from L-aspartate: step 4/4. Catalyzes the conversion of 4-hydroxy-tetrahydrodipicolinate (HTPA) to tetrahydrodipicolinate. The chain is 4-hydroxy-tetrahydrodipicolinate reductase from Bacillus cereus (strain B4264).